The primary structure comprises 392 residues: 26S proteasome regulatory subunit 8 homolog (392 aa).

176–183 contacts ATP; sequence GPPGTGKT.

Belongs to the AAA ATPase family. In terms of assembly, the 26S proteasome consists of a 20S proteasome core and two 19S regulatory subunits. The 20S proteasome core is composed of 28 subunits that are arranged in four stacked rings, resulting in a barrel-shaped structure. The two end rings are each formed by seven alpha subunits, and the two central rings are each formed by seven beta subunits. The catalytic chamber with the active sites is on the inside of the barrel.

It localises to the cytoplasm. It is found in the nucleus. Functionally, acts as a regulatory subunit of the 26S proteasome which degrades poly-ubiquitinated proteins in the cytoplasm and in the nucleus. It is essential for the regulated turnover of proteins and for the removal of misfolded proteins. The proteasome is a multicatalytic proteinase complex that is characterized by its ability to cleave peptides with Arg, Phe, Tyr, Leu, and Glu adjacent to the leaving group at neutral or slightly basic pH. The polypeptide is 26S proteasome regulatory subunit 8 homolog (RPT6) (Encephalitozoon cuniculi (strain GB-M1) (Microsporidian parasite)).